Consider the following 6359-residue polypeptide: Bacitracin synthase 3 (6359 aa).

A domain 1 (isoleucine-activating) region spans residues 461–1034 (LHELFEEQAM…IKGLGEYIRS (574 aa)). The segment covering 941–953 (VDRKALPEPDRTA) has biased composition (basic and acidic residues). The interval 941 to 962 (VDRKALPEPDRTAGAENEYEAP) is disordered. Carrier domains lie at 961-1036 (APRN…RSTK), 1993-2067 (APRN…KKQS), 3497-3572 (APRN…ESMK), 4539-4613 (PPRN…KAES), and 6047-6122 (PPRH…KHAQ). O-(pantetheine 4'-phosphoryl)serine is present on residues Ser996, Ser2028, and Ser3532. Positions 1517–2064 (FEDQTLTYRQ…RIKDLAKYVK (548 aa)) are domain 2 (D-phenylalanine-activating). The interval 2999-3570 (NKTIHQLFEE…IKDIGDFIES (572 aa)) is domain 3 (histidine-activating). Residues 4047-4612 (EQTAVVYADE…KSLSRYVKAE (566 aa)) are domain 4 (D-aspartic acid-activating). Positions 4521-4544 (IDTAALPEPQPGKETEYEPPRNET) are disordered. Residues 4531-4544 (PGKETEYEPPRNET) are compositionally biased toward basic and acidic residues. Ser4574 and Ser6082 each carry O-(pantetheine 4'-phosphoryl)serine. Residues 5549-6129 (IHRLFEEQAE…HAQDLLKDYT (581 aa)) are domain 5 (asparagine-activating).

The protein belongs to the ATP-dependent AMP-binding enzyme family. In terms of assembly, large multienzyme complex of BA1, BA2 and BA3. It depends on pantetheine 4'-phosphate as a cofactor.

It carries out the reaction L-aspartate = D-aspartate. The catalysed reaction is L-phenylalanine + ATP + H2O = D-phenylalanine + AMP + diphosphate + H(+). The protein operates within antibiotic biosynthesis; bacitracin biosynthesis. Functionally, induces peptide synthesis, activates and incorporates five amino acids, forms a thiazoline ring between the first two amino acids and incorporates a D-glutamine in the fourth position. The chain is Bacitracin synthase 3 (bacC) from Bacillus licheniformis.